The primary structure comprises 386 residues: Erythronate-4-phosphate dehydrogenase (386 aa).

Residues serine 59 and threonine 81 each contribute to the substrate site. Aspartate 162 is a binding site for NAD(+). The active site involves arginine 239. Aspartate 262 is an NAD(+) binding site. Glutamate 267 is a catalytic residue. Catalysis depends on histidine 284, which acts as the Proton donor. Glycine 287 contacts NAD(+). Tyrosine 288 provides a ligand contact to substrate.

The protein belongs to the D-isomer specific 2-hydroxyacid dehydrogenase family. PdxB subfamily. Homodimer.

Its subcellular location is the cytoplasm. It catalyses the reaction 4-phospho-D-erythronate + NAD(+) = (R)-3-hydroxy-2-oxo-4-phosphooxybutanoate + NADH + H(+). Its pathway is cofactor biosynthesis; pyridoxine 5'-phosphate biosynthesis; pyridoxine 5'-phosphate from D-erythrose 4-phosphate: step 2/5. Functionally, catalyzes the oxidation of erythronate-4-phosphate to 3-hydroxy-2-oxo-4-phosphonooxybutanoate. This Psychrobacter cryohalolentis (strain ATCC BAA-1226 / DSM 17306 / VKM B-2378 / K5) protein is Erythronate-4-phosphate dehydrogenase.